The sequence spans 380 residues: MTPLRKTNPLMKLINHSLVDLPAPSNISMWWNLGSLLGTCLVLQIVTGLFLAMHYTPDASMAFSSVAHITRDVNYGWVIRYLHANGASMFFICLFLHIGRGLYYGSFLYLETWNIGIILLLATMATAFMGYVLPWGQMSFWGATVITNLLSAVPYIGTDLVQWVWGGYSVDNATLTRFFTFHFILPFIITALVALHLLFLHETGSNNPLGISSQPDKITFHPYYTTKDILGLFLLLLTLMSLVLFSPDLLGDPDNYIQANPLSTPPHIKPEWYFLFAYAILRSVPNKLGGVLALLLSILILMTIPMLHTAKQQSMMFRPLSQLTYWLWAANLLTLTWIGGQPVSYPFITIGQVTSVLYFITILILVPTASLIENKMLKWT.

The next 4 membrane-spanning stretches (helical) occupy residues 33–53 (LGSL…FLAM), 77–98 (WVIR…FLHI), 113–133 (WNIG…GYVL), and 178–198 (FFTF…LHLL). Positions 83 and 97 each coordinate heme b. His182 and His196 together coordinate heme b. His201 contributes to the a ubiquinone binding site. The next 4 helical transmembrane spans lie at 226–246 (TKDI…VLFS), 288–308 (LGGV…PMLH), 320–340 (LSQL…WIGG), and 347–367 (FITI…ILVP).

This sequence belongs to the cytochrome b family. In terms of assembly, the cytochrome bc1 complex contains 11 subunits: 3 respiratory subunits (MT-CYB, CYC1 and UQCRFS1), 2 core proteins (UQCRC1 and UQCRC2) and 6 low-molecular weight proteins (UQCRH/QCR6, UQCRB/QCR7, UQCRQ/QCR8, UQCR10/QCR9, UQCR11/QCR10 and a cleavage product of UQCRFS1). This cytochrome bc1 complex then forms a dimer. It depends on heme b as a cofactor.

It localises to the mitochondrion inner membrane. Component of the ubiquinol-cytochrome c reductase complex (complex III or cytochrome b-c1 complex) that is part of the mitochondrial respiratory chain. The b-c1 complex mediates electron transfer from ubiquinol to cytochrome c. Contributes to the generation of a proton gradient across the mitochondrial membrane that is then used for ATP synthesis. In Nomascus leucogenys (Northern white-cheeked gibbon), this protein is Cytochrome b (MT-CYB).